The chain runs to 122 residues: Large ribosomal subunit protein uL14 (122 aa).

The protein belongs to the universal ribosomal protein uL14 family. Part of the 50S ribosomal subunit. Forms a cluster with proteins L3 and L19. In the 70S ribosome, L14 and L19 interact and together make contacts with the 16S rRNA in bridges B5 and B8.

Its function is as follows. Binds to 23S rRNA. Forms part of two intersubunit bridges in the 70S ribosome. The polypeptide is Large ribosomal subunit protein uL14 (Chloroflexus aggregans (strain MD-66 / DSM 9485)).